The primary structure comprises 209 residues: Uridine kinase (209 aa).

Residue 12–19 (GGSGSGKT) coordinates ATP.

Belongs to the uridine kinase family.

It is found in the cytoplasm. It catalyses the reaction uridine + ATP = UMP + ADP + H(+). It carries out the reaction cytidine + ATP = CMP + ADP + H(+). Its pathway is pyrimidine metabolism; CTP biosynthesis via salvage pathway; CTP from cytidine: step 1/3. It functions in the pathway pyrimidine metabolism; UMP biosynthesis via salvage pathway; UMP from uridine: step 1/1. The polypeptide is Uridine kinase (Listeria monocytogenes serotype 4b (strain CLIP80459)).